Reading from the N-terminus, the 175-residue chain is Ribosome maturation factor RimM (175 aa).

One can recognise a PRC barrel domain in the interval 99 to 172; it reads SIEFTWEHFI…KLTMIIPDGL (74 aa).

It belongs to the RimM family. Binds ribosomal protein uS19.

Its subcellular location is the cytoplasm. An accessory protein needed during the final step in the assembly of 30S ribosomal subunit, possibly for assembly of the head region. Essential for efficient processing of 16S rRNA. May be needed both before and after RbfA during the maturation of 16S rRNA. It has affinity for free ribosomal 30S subunits but not for 70S ribosomes. The protein is Ribosome maturation factor RimM of Porphyromonas gingivalis (strain ATCC BAA-308 / W83).